Consider the following 259-residue polypeptide: MLLNIANSVGKRTIKFAQSVGSFSLFSFAAVSSIIRPPLYLSLIIRQLLFIGFHSLPVVAMTTFFSGAVLALQSYTGFSRFSAESSIATVVVLSLTRELGPVLAGLMVAGRVGASIAAEIATMRVTEQVDALYTLSTDPIKYLVFPRVIAAIITMPCLVLIGDIIGVMGGYLVGVYKLDFNSTAYLTSTFHYLEPIDVISGLVKAGVFGFIISIISCYSGYYSGKGAKGVGRATTSAVVNSSILILISNYLITELFFKV.

Transmembrane regions (helical) follow at residues 13-35, 49-69, 148-168, 195-215, and 237-257; these read TIKF…SSII, LFIG…SGAV, VIAA…IGVM, PIDV…ISII, and AVVN…ELFF.

The protein belongs to the MlaE permease family.

It localises to the cell inner membrane. Functionally, could be part of an ABC transporter complex. This is Probable ABC transporter permease protein RF_0080 from Rickettsia felis (strain ATCC VR-1525 / URRWXCal2) (Rickettsia azadi).